The primary structure comprises 444 residues: Phosphoglucosamine mutase (444 aa).

Serine 104 (phosphoserine intermediate) is an active-site residue. 4 residues coordinate Mg(2+): serine 104, aspartate 243, aspartate 245, and aspartate 247. Serine 104 carries the phosphoserine modification.

Belongs to the phosphohexose mutase family. Requires Mg(2+) as cofactor. Activated by phosphorylation.

The enzyme catalyses alpha-D-glucosamine 1-phosphate = D-glucosamine 6-phosphate. Functionally, catalyzes the conversion of glucosamine-6-phosphate to glucosamine-1-phosphate. The protein is Phosphoglucosamine mutase of Neisseria meningitidis serogroup A / serotype 4A (strain DSM 15465 / Z2491).